The primary structure comprises 456 residues: General transcription factor IIE subunit 1 (456 aa).

The 90-residue stretch at 11–100 folds into the HTH TFE/IIEalpha-type domain; sequence LDDLVKMVIR…LWYIDYKHII (90 aa). The C4-type zinc-finger motif lies at 129–157; it reads CQTCHKVYTALDIPKLLNMDTGALACEIC. The interval 345–402 is disordered; sequence ESAPDSGDADGNGSNSGSGGSTIEGNDGGNGEHQNKKMKLDDSQTVSSMSQSDDDGKD. A compositionally biased stretch (low complexity) spans 347–357; it reads APDSGDADGNG. Gly residues predominate over residues 358 to 375; that stretch reads SNSGSGGSTIEGNDGGNG. The span at 377 to 386 shows a compositional bias: basic and acidic residues; the sequence is HQNKKMKLDD.

Belongs to the TFIIE alpha subunit family. As to quaternary structure, TFIIE is a tetramer of two alpha and two beta subunits.

It is found in the nucleus. Its function is as follows. Recruits TFIIH to the initiation complex and stimulates the RNA polymerase II C-terminal domain kinase and DNA-dependent ATPase activities of TFIIH. Both TFIIH and TFIIE are required for promoter clearance by RNA polymerase. The protein is General transcription factor IIE subunit 1 (gtf2e1-1) of Dictyostelium discoideum (Social amoeba).